Here is a 541-residue protein sequence, read N- to C-terminus: Protein panoramix (541 aa).

The interval 1–169 (MEAPMKLEVK…TLVPDEQQSF (169 aa)) is interaction with Piwi. Disordered stretches follow at residues 52–75 (SDPEDGNLVHHSATPTSDEHLQPS) and 198–281 (TAEN…TELD). The stretch at 194–216 (MLEMTAENRKVKHKKKKHKKERS) forms a coiled coil. Positions 203–220 (KVKHKKKKHKKERSHRSN) are enriched in basic residues. Basic and acidic residues-rich tracts occupy residues 241 to 251 (DDKNQFDCDYR) and 269 to 279 (SSKERKLRDTE). The segment at 315–343 (LSKADKRSLAVARAELVLEQIQQKANKEE) is nxf2-interacting region (NIR). Residues 323–343 (LAVARAELVLEQIQQKANKEE) are a coiled coil. The necessary for interaction with nxf2 and protein stability stretch occupies residues 387-446 (TPGTRIDLSKWGLETVPEATKRLLRLLGIDVARLKELQSTVKPSQRILKLKKEQLEQGLA).

In terms of assembly, in the ovaries, part of a complex composed of at least Panx, nxf2, piwi and Nxt1. The complex is knowns as Panx-induced cotranscriptional silencing (PICTS) complex, Panx-nxf2-dependent TAP/p15 silencing (Pandas complex), SFiNX (silencing factor interacting nuclear export variant) or piwi-Panx-nxf2-p15 (PPNP) complex. Interacts (via NIR region) with nxf2 (via TAP-C domain); the interaction is direct. As to expression, expressed in female gonads (at protein level).

The protein resides in the nucleus. In terms of biological role, acts via the piwi-interacting RNA (piRNA) pathway which mediates the repression of transposable elements during meiosis by forming complexes composed of piRNAs and piwi proteins and governs the methylation and subsequent repression of transposons. Required for transcriptional silencing of transposons targeted by piwi and confers its effects by interacting with nascent RNA transcripts. Likely to be recruited to nascent transcripts cotranscriptionally by piwi and to recruit additional factors involved in transcriptional silencing. In the ovaries, forms a complex with nxf2, piwi and Nxt1 which acts as effectors of cotranscriptional transposon silencing. The interaction with nxf2 stabilizes the nuclear protein complex. The polypeptide is Protein panoramix (Drosophila melanogaster (Fruit fly)).